We begin with the raw amino-acid sequence, 167 residues long: Secretion monitor (167 aa).

The signal sequence occupies residues 1–36; that stretch reads MIGILNRWRQFGRRYFWPHLLLGMVAASFGLPQASA.

The protein belongs to the SecM family.

The protein resides in the cytoplasm. It is found in the cytosol. Its subcellular location is the periplasm. Functionally, regulates secA expression by translational coupling of the secM secA operon. Translational pausing at a specific Pro residue 5 residues before the end of the protein may allow disruption of a mRNA repressor helix that normally suppresses secA translation initiation. The protein is Secretion monitor of Erwinia tasmaniensis (strain DSM 17950 / CFBP 7177 / CIP 109463 / NCPPB 4357 / Et1/99).